The following is a 332-amino-acid chain: MTRARMYYDEDADLSVLDNKTIAIVGYGSQGHAHALNLKDSGIDVIVGLYEGSRSWARAENEGLAVYPTAEAAAKADLVMILLPDEVQREIYNRDIAPHLGTGKTLAFAHGFNIHFSQIVPSQEVDVLMVAPKGPGHLVRRVFTEGKGVPCLFAVEQDASGRARATAMAYARAIGGTRAGILETTFREEAETDLFGEQTVLCGGLTALIKAGFETLVEAGYQPELAYFECLHEVKLIVDLIVEGGLAKMRDSISNTAEFGDYTRGPRIVDERTKAEMKKILAEIQNGEFAKQWVLDSQANYASFKAMRRREAEHPIEEVGADLRKMMSWLRP.

The KARI N-terminal Rossmann domain maps to 4–184; sequence ARMYYDEDAD…GGTRAGILET (181 aa). Residues 27–30, Ser53, Ser55, and 85–88 each bind NADP(+); these read YGSQ and DEVQ. His110 is an active-site residue. Gly136 is a binding site for NADP(+). In terms of domain architecture, KARI C-terminal knotted spans 185 to 330; sequence TFREEAETDL…ADLRKMMSWL (146 aa). Residues Asp193, Glu197, Glu229, and Glu233 each coordinate Mg(2+). Ser254 is a substrate binding site.

This sequence belongs to the ketol-acid reductoisomerase family. Requires Mg(2+) as cofactor.

It catalyses the reaction (2R)-2,3-dihydroxy-3-methylbutanoate + NADP(+) = (2S)-2-acetolactate + NADPH + H(+). The catalysed reaction is (2R,3R)-2,3-dihydroxy-3-methylpentanoate + NADP(+) = (S)-2-ethyl-2-hydroxy-3-oxobutanoate + NADPH + H(+). It participates in amino-acid biosynthesis; L-isoleucine biosynthesis; L-isoleucine from 2-oxobutanoate: step 2/4. Its pathway is amino-acid biosynthesis; L-valine biosynthesis; L-valine from pyruvate: step 2/4. Involved in the biosynthesis of branched-chain amino acids (BCAA). Catalyzes an alkyl-migration followed by a ketol-acid reduction of (S)-2-acetolactate (S2AL) to yield (R)-2,3-dihydroxy-isovalerate. In the isomerase reaction, S2AL is rearranged via a Mg-dependent methyl migration to produce 3-hydroxy-3-methyl-2-ketobutyrate (HMKB). In the reductase reaction, this 2-ketoacid undergoes a metal-dependent reduction by NADPH to yield (R)-2,3-dihydroxy-isovalerate. In Gloeobacter violaceus (strain ATCC 29082 / PCC 7421), this protein is Ketol-acid reductoisomerase (NADP(+)).